The sequence spans 832 residues: MPLEMEPKMSKLVFGCQRSSTSDDDSGCALEEYAWVPPGLRPEQIQLYFACLPEEKVPYVNSPGEKHRIKQLLYQLPPHDNEVRYCQSLSEEEKKELQVFSAQRKKEALGRGTIKLLSRAVMHAVCEQCGLQMNGGEVAVFASRAGPGVCWHPSCFVCFTCNELLVDLIYFYQDGKIHCGRHHAELLKPRCSACDEIIFADECTEAEGRHWHMKHFCCLECETVLGGQRYIMKDGRPFCCGCFESLYAEYCETCGEHIGVDHAQMTYDGQHWHATEACFSCAQCKASLLGCPFLPKQGQIYCSKTCSLGEDIHASDSSDSAFQSARSRDSRRSVRMGRSSRSADQCRQSLLLSPALNYKFPGLSGNADDTLSRKLDDVSLASRQGAGFANEEFWKARVEQEASEDPEEWAEHEDYMTQLLLKFGDKNLFQQQSSEVDPRASEHWIPDNMVTNKPEVKPNHQGLASKKYQSDMYWAQSQDGLGDSAYGSHPGPASSRRLQELDLDHGAAGYTHDQSQWYEDSLECLSDLKPEQSIRDSMDSLALSNITGASVDGESKPRPSLYSLQNFEEIEAEDCEKMSNMGTLNSSMLHRSAESLQSLNSGLCPEKILPEEKPAHLPVLRRSKSQSRPQQVKFSDDVIDNGSYDIEIRQPPMSERTRRRAYHFEERGSRPHHHRHRRSRKSRSDNALNLVTERKYSAKDRLRLYTPDNYEKFIQNKSARELQAYMQNANLYSQYAHATSDYALQNPGMNRFLGLCGEDDDSWCSSSTSSSDSEEEGYFLGQPIPQPRPQRFTYYTDDLSSPASALPTPQFTQRTTKSKKKKGHKGKNCIIS.

The PET domain maps to 14-122; it reads FGCQRSSTSD…TIKLLSRAVM (109 aa). LIM zinc-binding domains follow at residues 124 to 188, 189 to 249, and 250 to 313; these read AVCE…ELLK, PRCS…LYAE, and YCET…EDIH. Positions 314–342 are disordered; that stretch reads ASDSSDSAFQSARSRDSRRSVRMGRSSRS. Residues Ser-315, Ser-592, and Ser-595 each carry the phosphoserine modification. Disordered stretches follow at residues 663–688 and 765–832; these read HFEE…DNAL and SSST…CIIS. Over residues 670 to 681 the composition is skewed to basic residues; the sequence is RPHHHRHRRSRK. Ser-684 is modified (phosphoserine). A compositionally biased stretch (polar residues) spans 798 to 815; the sequence is DLSSPASALPTPQFTQRT. A compositionally biased stretch (basic residues) spans 816-832; that stretch reads TKSKKKKGHKGKNCIIS. Position 829 is a cysteine methyl ester (Cys-829). Residue Cys-829 is the site of S-farnesyl cysteine attachment. A propeptide spans 830–832 (removed in mature form); sequence IIS.

It belongs to the prickle / espinas / testin family. In terms of assembly, interacts with REST.

The protein localises to the nucleus membrane. The protein resides in the cytoplasm. Its subcellular location is the cytosol. Functionally, involved in the planar cell polarity pathway that controls convergent extension during gastrulation and neural tube closure. Convergent extension is a complex morphogenetic process during which cells elongate, move mediolaterally, and intercalate between neighboring cells, leading to convergence toward the mediolateral axis and extension along the anteroposterior axis. Necessary for nuclear localization of REST. May serve as nuclear receptor. The sequence is that of Prickle-like protein 1 (Prickle1) from Mus musculus (Mouse).